Here is a 135-residue protein sequence, read N- to C-terminus: Transcription antitermination protein NusB (135 aa).

This sequence belongs to the NusB family.

In terms of biological role, involved in transcription antitermination. Required for transcription of ribosomal RNA (rRNA) genes. Binds specifically to the boxA antiterminator sequence of the ribosomal RNA (rrn) operons. The sequence is that of Transcription antitermination protein NusB from Wolinella succinogenes (strain ATCC 29543 / DSM 1740 / CCUG 13145 / JCM 31913 / LMG 7466 / NCTC 11488 / FDC 602W) (Vibrio succinogenes).